The primary structure comprises 129 residues: Profilin-4 (129 aa).

Belongs to the profilin family. As to expression, expressed in testis, in germ cells in seminiferous tubules (at protein level).

The protein resides in the cytoplasm. Its function is as follows. Involved in male fertility. Required for manchette development and acrosome biogenesis during spermiogenesis. Binds in vitro to phospholipids, including phosphatidylinositol 3-phosphate (PtdIns(3)P), phosphatidylinositol 4,5-bisphosphate (PtdIns(4,5)P2), phosphatidylinositol 4-phosphate (PtdIns(4)P) and phosphatidic acid (PA). Contrary to other profilin family members, does not bind to actin in vitro. In Mus musculus (Mouse), this protein is Profilin-4 (Pfn4).